We begin with the raw amino-acid sequence, 721 residues long: Protein mu-NS (721 aa).

Residues methionine 1–proline 13 form an interaction with sigma-NS region. An RNA-binding region spans residues methionine 1–serine 38. An interaction with mu-2 region spans residues valine 14–aspartate 40. The segment at serine 471–leucine 721 is involved in the formation of factory-like inclusions. Coiled-coil stretches lie at residues proline 522–glutamine 559 and leucine 628–glutamine 684.

Belongs to the orthoreovirus mu-NS protein family. In terms of assembly, interacts with mu-2. Interacts with sigma-NS; in viral factories. Interacts with the inner capsid proteins lambda-1 and sigma-2, and outer capsid protein lambda-2; in viral factories. The N-terminus is blocked.

The protein localises to the host cytoplasm. In terms of biological role, non-structural protein implicated with protein sigma-NS in forming the matrix of viral factories, which are large inclusions in the host cytoplasm where replication intermediates are assembled and viral RNA replication takes place. Together with mu-2, recruits the other core proteins to these factories. Binds RNA and recruits viral mRNAs to sites of viral replication. The sequence is that of Protein mu-NS (M3) from Reovirus type 3 (strain Dearing) (T3D).